The following is a 271-amino-acid chain: L-aspartate dehydrogenase (271 aa).

Positions 124 and 192 each coordinate NAD(+). H222 is a catalytic residue.

Belongs to the L-aspartate dehydrogenase family.

It catalyses the reaction L-aspartate + NADP(+) + H2O = oxaloacetate + NH4(+) + NADPH + H(+). The enzyme catalyses L-aspartate + NAD(+) + H2O = oxaloacetate + NH4(+) + NADH + H(+). It functions in the pathway cofactor biosynthesis; NAD(+) biosynthesis; iminoaspartate from L-aspartate (dehydrogenase route): step 1/1. Functionally, specifically catalyzes the NAD or NADP-dependent dehydrogenation of L-aspartate to iminoaspartate. In Methanosarcina barkeri (strain Fusaro / DSM 804), this protein is L-aspartate dehydrogenase.